Consider the following 217-residue polypeptide: Cytidylate kinase (217 aa).

An ATP-binding site is contributed by 10-18 (GPAGAGKST).

The protein belongs to the cytidylate kinase family. Type 1 subfamily.

Its subcellular location is the cytoplasm. The enzyme catalyses CMP + ATP = CDP + ADP. It catalyses the reaction dCMP + ATP = dCDP + ADP. The sequence is that of Cytidylate kinase from Clostridium botulinum (strain Loch Maree / Type A3).